The primary structure comprises 336 residues: Large ribosomal subunit protein uL1m (336 aa).

The transit peptide at 1–50 (MAAAVRCLRRVLIHHQRHCLCKMASQASLYPCSVNSLLHNRHFAAAAAAA) directs the protein to the mitochondrion. At Ser85 the chain carries Phosphoserine.

Belongs to the universal ribosomal protein uL1 family.

Its subcellular location is the mitochondrion. The polypeptide is Large ribosomal subunit protein uL1m (Mrpl1) (Mus musculus (Mouse)).